The following is a 79-amino-acid chain: MKSLTWILGLWALAACFTPGESQRGPRGPYPPGPLAPPQPFGPGFVPPPPPPPYGPGRIPPPPPAPYGPGIFPPPPPQP.

A signal peptide spans 1–22 (MKSLTWILGLWALAACFTPGES). The interval 19–79 (PGESQRGPRG…GIFPPPPPQP (61 aa)) is disordered. Position 23 is a pyrrolidone carboxylic acid (Gln-23). Positions 28-79 (GPYPPGPLAPPQPFGPGFVPPPPPPPYGPGRIPPPPPAPYGPGIFPPPPPQP) are enriched in pro residues.

The protein belongs to the PROL1/PROL3 family. P-A and D1A are probably degradation products of P-B. Secreted into saliva by submaxillary gland. Not expressed in heart, brain, lung, liver, skeletal muscle, Kidney, pancreas or placenta.

Its subcellular location is the secreted. The protein is Submaxillary gland androgen-regulated protein 3B (SMR3B) of Homo sapiens (Human).